The sequence spans 96 residues: Putative pterin-4-alpha-carbinolamine dehydratase (96 aa).

Belongs to the pterin-4-alpha-carbinolamine dehydratase family.

It carries out the reaction (4aS,6R)-4a-hydroxy-L-erythro-5,6,7,8-tetrahydrobiopterin = (6R)-L-erythro-6,7-dihydrobiopterin + H2O. In Paraburkholderia xenovorans (strain LB400), this protein is Putative pterin-4-alpha-carbinolamine dehydratase.